The chain runs to 268 residues: Large ribosomal subunit protein mL46 (268 aa).

A mitochondrion-targeting transit peptide spans 1 to 25 (MYLKRNIINMQRSFSRQFHISVRNS).

Belongs to the mitochondrion-specific ribosomal protein mL46 family. Component of the mitochondrial large ribosomal subunit (mt-LSU). Mature yeast 74S mitochondrial ribosomes consist of a small (37S) and a large (54S) subunit. The 37S small subunit contains a 15S ribosomal RNA (15S mt-rRNA) and at least 32 different proteins. The 54S large subunit contains a 21S rRNA (21S mt-rRNA) and at least 45 different proteins.

It localises to the mitochondrion. Its function is as follows. Component of the mitochondrial ribosome (mitoribosome), a dedicated translation machinery responsible for the synthesis of mitochondrial genome-encoded proteins, including at least some of the essential transmembrane subunits of the mitochondrial respiratory chain. The mitoribosomes are attached to the mitochondrial inner membrane and translation products are cotranslationally integrated into the membrane. This chain is Large ribosomal subunit protein mL46 (mrpl17), found in Schizosaccharomyces pombe (strain 972 / ATCC 24843) (Fission yeast).